The primary structure comprises 217 residues: MARQTYNYHVTHFVTSAPDIRHLPEDTGIEVAFAGRSNAGKSSALNTLTNQKSLARTSKTPGRTQLINLFEVEDGIRLVDLPGYGYAEVPEEMKRKWQQALGEYLQKRQCLKGLVVLMDIRHPLKDLDQQMIAWAVEVGLPVLLLLTKADKLASGARKAQLNMVREAVLPFMGDIQVDAFSSLKKFGVDKLRDKLDTWFSEITPQQADKDDDPSIGE.

The 175-residue stretch at 27-201 (TGIEVAFAGR…RDKLDTWFSE (175 aa)) folds into the EngB-type G domain. GTP contacts are provided by residues 35–42 (GRSNAGKS), 62–66 (GRTQL), 80–83 (DLPG), 147–150 (TKAD), and 180–182 (FSS). Mg(2+)-binding residues include Ser42 and Thr64.

It belongs to the TRAFAC class TrmE-Era-EngA-EngB-Septin-like GTPase superfamily. EngB GTPase family. Requires Mg(2+) as cofactor.

Its function is as follows. Necessary for normal cell division and for the maintenance of normal septation. The sequence is that of Probable GTP-binding protein EngB from Edwardsiella ictaluri (strain 93-146).